Here is a 435-residue protein sequence, read N- to C-terminus: Serine--tRNA ligase (435 aa).

239–241 (TAE) serves as a coordination point for L-serine. Residue 270-272 (RAE) coordinates ATP. Residue glutamate 293 coordinates L-serine. Residue 357 to 360 (EISS) coordinates ATP. Serine 393 contributes to the L-serine binding site.

It belongs to the class-II aminoacyl-tRNA synthetase family. Type-1 seryl-tRNA synthetase subfamily. As to quaternary structure, homodimer. The tRNA molecule binds across the dimer.

Its subcellular location is the cytoplasm. The enzyme catalyses tRNA(Ser) + L-serine + ATP = L-seryl-tRNA(Ser) + AMP + diphosphate + H(+). It carries out the reaction tRNA(Sec) + L-serine + ATP = L-seryl-tRNA(Sec) + AMP + diphosphate + H(+). Its pathway is aminoacyl-tRNA biosynthesis; selenocysteinyl-tRNA(Sec) biosynthesis; L-seryl-tRNA(Sec) from L-serine and tRNA(Sec): step 1/1. Its function is as follows. Catalyzes the attachment of serine to tRNA(Ser). Is also able to aminoacylate tRNA(Sec) with serine, to form the misacylated tRNA L-seryl-tRNA(Sec), which will be further converted into selenocysteinyl-tRNA(Sec). The polypeptide is Serine--tRNA ligase (Parvibaculum lavamentivorans (strain DS-1 / DSM 13023 / NCIMB 13966)).